The primary structure comprises 809 residues: Glutamine--tRNA ligase (809 aa).

Residues 185-198 (DLIKKKTKNNEKKK) show a composition bias toward basic and acidic residues. Positions 185–216 (DLIKKKTKNNEKKKTNSAKKSSDNSASSGPKR) are disordered. The 'HIGH' region signature appears at 258-268 (PEPNGYLHIGH). Residues 259 to 261 (EPN) and 265 to 271 (HIGHSKA) contribute to the ATP site. Position 291 (Asp291) interacts with L-glutamine. At Ser378 the chain carries Phosphoserine. Tyr440 contacts L-glutamine. Residues Thr459, 488 to 489 (RL), and 496 to 498 (LSK) contribute to the ATP site. The short motif at 495-499 (VLSKR) is the 'KMSKS' region element.

It belongs to the class-I aminoacyl-tRNA synthetase family.

The catalysed reaction is tRNA(Gln) + L-glutamine + ATP = L-glutaminyl-tRNA(Gln) + AMP + diphosphate. The polypeptide is Glutamine--tRNA ligase (GLN4) (Saccharomyces cerevisiae (strain ATCC 204508 / S288c) (Baker's yeast)).